We begin with the raw amino-acid sequence, 383 residues long: Dual-specificity RNA methyltransferase RlmN (383 aa).

The Proton acceptor role is filled by glutamate 93. Residues glutamate 99–aspartate 339 form the Radical SAM core domain. A disulfide bridge connects residues cysteine 106 and cysteine 344. [4Fe-4S] cluster contacts are provided by cysteine 113, cysteine 117, and cysteine 120. Residues glycine 170–glutamate 171, serine 202, serine 224–histidine 226, and asparagine 301 contribute to the S-adenosyl-L-methionine site. Catalysis depends on cysteine 344, which acts as the S-methylcysteine intermediate.

The protein belongs to the radical SAM superfamily. RlmN family. The cofactor is [4Fe-4S] cluster.

The protein resides in the cytoplasm. The enzyme catalyses adenosine(2503) in 23S rRNA + 2 reduced [2Fe-2S]-[ferredoxin] + 2 S-adenosyl-L-methionine = 2-methyladenosine(2503) in 23S rRNA + 5'-deoxyadenosine + L-methionine + 2 oxidized [2Fe-2S]-[ferredoxin] + S-adenosyl-L-homocysteine. It carries out the reaction adenosine(37) in tRNA + 2 reduced [2Fe-2S]-[ferredoxin] + 2 S-adenosyl-L-methionine = 2-methyladenosine(37) in tRNA + 5'-deoxyadenosine + L-methionine + 2 oxidized [2Fe-2S]-[ferredoxin] + S-adenosyl-L-homocysteine. Specifically methylates position 2 of adenine 2503 in 23S rRNA and position 2 of adenine 37 in tRNAs. m2A2503 modification seems to play a crucial role in the proofreading step occurring at the peptidyl transferase center and thus would serve to optimize ribosomal fidelity. The protein is Dual-specificity RNA methyltransferase RlmN of Ralstonia pickettii (strain 12J).